The following is a 178-amino-acid chain: Fatty-acid and retinol-binding protein 1 (178 aa).

An N-terminal signal peptide occupies residues 1 to 16 (MYHRLILLALIGTTMA). Coiled coils occupy residues 67 to 89 (DAALEALKAKSDNLYKNAVELRN) and 130 to 153 (KQAARDIIAKYQALSEETKEELKV).

The protein belongs to the fatty-acid and retinol-binding protein (FARBP) family. In terms of processing, not glycosylated.

It localises to the secreted. Its function is as follows. Binds retinol and different fatty acids. This chain is Fatty-acid and retinol-binding protein 1, found in Wuchereria bancrofti.